A 490-amino-acid polypeptide reads, in one-letter code: Aspartyl/glutamyl-tRNA(Asn/Gln) amidotransferase subunit B (490 aa).

This sequence belongs to the GatB/GatE family. GatB subfamily. In terms of assembly, heterotrimer of A, B and C subunits.

The enzyme catalyses L-glutamyl-tRNA(Gln) + L-glutamine + ATP + H2O = L-glutaminyl-tRNA(Gln) + L-glutamate + ADP + phosphate + H(+). It carries out the reaction L-aspartyl-tRNA(Asn) + L-glutamine + ATP + H2O = L-asparaginyl-tRNA(Asn) + L-glutamate + ADP + phosphate + 2 H(+). Its function is as follows. Allows the formation of correctly charged Asn-tRNA(Asn) or Gln-tRNA(Gln) through the transamidation of misacylated Asp-tRNA(Asn) or Glu-tRNA(Gln) in organisms which lack either or both of asparaginyl-tRNA or glutaminyl-tRNA synthetases. The reaction takes place in the presence of glutamine and ATP through an activated phospho-Asp-tRNA(Asn) or phospho-Glu-tRNA(Gln). The sequence is that of Aspartyl/glutamyl-tRNA(Asn/Gln) amidotransferase subunit B from Burkholderia mallei (strain NCTC 10247).